The primary structure comprises 140 residues: ATP synthase epsilon chain (140 aa).

Belongs to the ATPase epsilon chain family. As to quaternary structure, F-type ATPases have 2 components, CF(1) - the catalytic core - and CF(0) - the membrane proton channel. CF(1) has five subunits: alpha(3), beta(3), gamma(1), delta(1), epsilon(1). CF(0) has three main subunits: a, b and c.

Its subcellular location is the cell inner membrane. Its function is as follows. Produces ATP from ADP in the presence of a proton gradient across the membrane. The polypeptide is ATP synthase epsilon chain (Nitrosomonas europaea (strain ATCC 19718 / CIP 103999 / KCTC 2705 / NBRC 14298)).